The following is a 268-amino-acid chain: MEISQNQKNILLTISYDGTNFCGWQKQTKEGAETFRTVQGELEKALTKIHKHPIETNGSGRTDSGVHAARQAVNFFCDIKSMRASNFLPALNSILPKDIRVMDAAEVSPLLHARFNALSRTYRYKIKCGKTIFAHEQPYTWHIRRYPDIAALNEMASCLSGELDCTAFSAAGDQSISKSRYIKKAVFFIENDYLIFEICANAFLWKMVRSIVGTLLHLDEIGASKKDFKDILESKMREKAGPTAPPQGLFLWSIEYPEDLLKAPPETF.

Asp-63 serves as the catalytic Nucleophile. Tyr-122 provides a ligand contact to substrate.

This sequence belongs to the tRNA pseudouridine synthase TruA family. In terms of assembly, homodimer.

It catalyses the reaction uridine(38/39/40) in tRNA = pseudouridine(38/39/40) in tRNA. Its function is as follows. Formation of pseudouridine at positions 38, 39 and 40 in the anticodon stem and loop of transfer RNAs. This chain is tRNA pseudouridine synthase A, found in Treponema denticola (strain ATCC 35405 / DSM 14222 / CIP 103919 / JCM 8153 / KCTC 15104).